The following is a 245-amino-acid chain: Enolase-phosphatase E1 (245 aa).

The protein belongs to the HAD-like hydrolase superfamily. MasA/MtnC family. Monomer. The cofactor is Mg(2+).

It carries out the reaction 5-methylsulfanyl-2,3-dioxopentyl phosphate + H2O = 1,2-dihydroxy-5-(methylsulfanyl)pent-1-en-3-one + phosphate. Its pathway is amino-acid biosynthesis; L-methionine biosynthesis via salvage pathway; L-methionine from S-methyl-5-thio-alpha-D-ribose 1-phosphate: step 3/6. It participates in amino-acid biosynthesis; L-methionine biosynthesis via salvage pathway; L-methionine from S-methyl-5-thio-alpha-D-ribose 1-phosphate: step 4/6. In terms of biological role, bifunctional enzyme that catalyzes the enolization of 2,3-diketo-5-methylthiopentyl-1-phosphate (DK-MTP-1-P) into the intermediate 2-hydroxy-3-keto-5-methylthiopentenyl-1-phosphate (HK-MTPenyl-1-P), which is then dephosphorylated to form the acireductone 1,2-dihydroxy-3-keto-5-methylthiopentene (DHK-MTPene). This chain is Enolase-phosphatase E1, found in Parasynechococcus marenigrum (strain WH8102).